Consider the following 334-residue polypeptide: Hemin transport system permease protein HmuU (334 aa).

9 helical membrane passes run 9-29 (LMLG…ANMG), 60-80 (LLAV…QGLF), 96-116 (AALC…LLAL), 117-137 (YSHM…IFTL), 149-169 (LLAG…LTYI), 191-211 (WSTL…GLLQ), 244-264 (AILI…GLVV), 278-298 (WLLP…DTLA), and 306-326 (EMPV…WLIL).

It belongs to the binding-protein-dependent transport system permease family. FecCD subfamily.

The protein resides in the cell inner membrane. Its function is as follows. Part of the binding-protein-dependent transport system for hemin; probably responsible for the translocation of the substrate across the membrane. This is Hemin transport system permease protein HmuU (hmuU) from Yersinia pestis.